Consider the following 440-residue polypeptide: Amino-acid acetyltransferase (440 aa).

One can recognise an N-acetyltransferase domain in the interval 289–429; that stretch reads ETIRLATVSD…QHYNYQRRSK (141 aa).

The protein belongs to the acetyltransferase family. ArgA subfamily.

The protein resides in the cytoplasm. It catalyses the reaction L-glutamate + acetyl-CoA = N-acetyl-L-glutamate + CoA + H(+). The protein operates within amino-acid biosynthesis; L-arginine biosynthesis; N(2)-acetyl-L-ornithine from L-glutamate: step 1/4. This Pasteurella multocida (strain Pm70) protein is Amino-acid acetyltransferase (argA).